The chain runs to 340 residues: MKIISKKYRLELYSMLVDLLNDNIPLYDALNKIQNEGVGIYDKNFIKSIELIKDRMKSNSSLTDALTGLIPDKEVLMINVAENSGKISSGIAAIRKNIIDADEIKSKAISSMITPSVMLIVTMVVIAGYSVKVFPTFESVLPVSRWPGVTQALYNLGFSLYEGLWIKVLIFVAIFITILVFMSKNITGNFRDGFLDKLPPFNFVKHIAATEFLANMSMLLDSRVPFKEGLDIVDHKTTRWLSSHLQRMKANMQEGLDYKQALDTNLLDKKMLLTMAVYSELPNFSDVMQKLAIEANINLHKKIATLAGVMKNISLITLALSVIWIFGAIFSLVDKLSSSL.

3 helical membrane passes run 108–131 (AISS…GYSV), 146–161 (WPGV…FSLY), and 312–333 (NISL…FSLV).

The protein belongs to the GSP F family.

It localises to the cell inner membrane. Its function is as follows. Probably involved in cholera toxin receptor (GM1) interaction in order to bring the cells within close proximity of the ganglioside for efficient toxin delivery. The chain is Toxin coregulated pilus biosynthesis protein E (tcpE) from Vibrio cholerae serotype O1 (strain ATCC 39315 / El Tor Inaba N16961).